The sequence spans 344 residues: Dihydroorotase (344 aa).

Zn(2+) is bound by residues histidine 13 and histidine 15. Substrate is bound by residues 15–17 and asparagine 41; that span reads HFR. 3 residues coordinate Zn(2+): lysine 98, histidine 135, and histidine 173. Lysine 98 is subject to N6-carboxylysine. Histidine 135 is a binding site for substrate. Leucine 218 is a substrate binding site. Aspartate 246 contributes to the Zn(2+) binding site. The active site involves aspartate 246. Residues histidine 250 and alanine 262 each contribute to the substrate site.

The protein belongs to the metallo-dependent hydrolases superfamily. DHOase family. Class II DHOase subfamily. Homodimer. It depends on Zn(2+) as a cofactor.

It carries out the reaction (S)-dihydroorotate + H2O = N-carbamoyl-L-aspartate + H(+). Its pathway is pyrimidine metabolism; UMP biosynthesis via de novo pathway; (S)-dihydroorotate from bicarbonate: step 3/3. Functionally, catalyzes the reversible cyclization of carbamoyl aspartate to dihydroorotate. This is Dihydroorotase from Shewanella woodyi (strain ATCC 51908 / MS32).